Consider the following 366-residue polypeptide: MASQLRLHLAATPPLLPHRRPHLARPLCPTLNPIRAPLPPLSRVLSHARPARAVGGGIEPKEGVVAEGDESGGGPVLVGEDSAAFELKDQSVASWAYFAGILGAVLVALNVLWIDPSTGVGTKFLDAVASVSDSHEVVMLLLTIIFAVVHSGMASLRESGEKIVGERVYRVLFAGISLPLAVTTIVYFINHRYDGTQLWQVQGITGIHELLWFSSFISFFFLYPSTFNLLEVAAVDKPKLHMWETGIMRITRHPQMVGQVIWCLAHTLWIGNSVAVAASVGLISHHLFGAWNGDRRLLSRYGEAFEVLKKRTSVMPFAAIIDGRQKLPKDYHKEFFRLPYVAITMLTLGAYFAHPLMQASSYQLPW.

Residues 1–45 (MASQLRLHLAATPPLLPHRRPHLARPLCPTLNPIRAPLPPLSRVL) constitute a chloroplast transit peptide. 6 helical membrane-spanning segments follow: residues 94-114 (SWAY…VLWI), 136-156 (EVVM…MASL), 171-191 (VLFA…FINH), 203-223 (GITG…FFLY), 260-280 (VIWC…AASV), and 338-358 (LPYV…PLMQ).

Expressed in leaves and roots, and at lower levels in embryos and endosperm.

The protein localises to the plastid. The protein resides in the chloroplast membrane. The catalysed reaction is 9,9',15-tri-cis-zeta-carotene = 9,9'-di-cis-zeta-carotene. Isomerase involved in the biosynthesis of carotenoids. Catalyzes the cis- to trans-conversion of the 15-cis-bond in 9,15,9'-tri-cis-zeta-carotene. In Zea mays (Maize), this protein is 15-cis-zeta-carotene isomerase, chloroplastic.